The following is a 365-amino-acid chain: P2Y purinoceptor 4 (365 aa).

Residues 1–34 lie on the Extracellular side of the membrane; the sequence is MASTESSLLRSLGLSPGPGSSEVELDCWFDEDFK. Residues 35-61 form a helical membrane-spanning segment; sequence FILLPVSYAVVFVLGLGLNAPTLWLFI. The Cytoplasmic segment spans residues 62–72; the sequence is FRLRPWDATAT. A helical transmembrane segment spans residues 73–95; that stretch reads YMFHLALSDTLYVLSLPTLIYYY. Residues 96 to 112 are Extracellular-facing; that stretch reads AAHNHWPFGTEICKFVR. The cysteines at positions 108 and 185 are disulfide-linked. Residues 113–131 form a helical membrane-spanning segment; sequence FLFYWNLYCSVLFLTCISV. Over 132 to 154 the chain is Cytoplasmic; the sequence is HRYLGICHPLRALRWGRPRLAGL. The helical transmembrane segment at 155–174 threads the bilayer; that stretch reads LCLAVWLVVAGCLVPNLFFV. The Extracellular segment spans residues 175–196; the sequence is TTSNKGTTVLCHDTTRPEEFDH. The helical transmembrane segment at 197–222 threads the bilayer; it reads YVHFSSAVMGLLFGVPCLVTLVCYGL. Topologically, residues 223–246 are cytoplasmic; it reads MARRLYQPLPGSAQSSSRLRSLRT. The helical transmembrane segment at 247–269 threads the bilayer; sequence IAVVLTVFAVCFVPFHITRTIYY. Topologically, residues 270–287 are extracellular; it reads LARLLEADCRVLNIVNVV. The helical transmembrane segment at 288–309 threads the bilayer; the sequence is YKVTRPLASANSCLDPVLYLLT. Topologically, residues 310 to 365 are cytoplasmic; the sequence is GDKYRRQLRQLCGGGKPQPRTAASSLALVSLPEDSSCRWAATPQDSSCSTPRADRL. Residues Ser333 and Ser334 each carry the phosphoserine modification.

The protein belongs to the G-protein coupled receptor 1 family. Phosphorylation of Ser-333 and Ser-334 is a key step in agonist-dependent desensitization and loss of surface P2RY4. This phosphorylation does not involve PKC, nor other calcium activated kinases. Pancreas.

The protein localises to the cell membrane. Functionally, receptor for UTP and UDP coupled to G-proteins that activate a phosphatidylinositol-calcium second messenger system. Not activated by ATP or ADP. The protein is P2Y purinoceptor 4 (P2RY4) of Homo sapiens (Human).